A 273-amino-acid chain; its full sequence is Large ribosomal subunit protein uL2 (273 aa).

Disordered stretches follow at residues 35-54 and 222-273; these read DKKDKSGGRNNNGRITTRHI and GMAM…RRNK. The span at 229-239 shows a compositional bias: basic and acidic residues; the sequence is DHPHGGGEGRN. Residues 253-273 show a composition bias toward basic residues; the sequence is KGFKTRKNKRTDKYIVRRRNK.

Belongs to the universal ribosomal protein uL2 family. As to quaternary structure, part of the 50S ribosomal subunit. Forms a bridge to the 30S subunit in the 70S ribosome.

One of the primary rRNA binding proteins. Required for association of the 30S and 50S subunits to form the 70S ribosome, for tRNA binding and peptide bond formation. It has been suggested to have peptidyltransferase activity; this is somewhat controversial. Makes several contacts with the 16S rRNA in the 70S ribosome. The sequence is that of Large ribosomal subunit protein uL2 from Aeromonas hydrophila subsp. hydrophila (strain ATCC 7966 / DSM 30187 / BCRC 13018 / CCUG 14551 / JCM 1027 / KCTC 2358 / NCIMB 9240 / NCTC 8049).